We begin with the raw amino-acid sequence, 88 residues long: MPKHSPPDTSPVARFEQSLQELEQLVQNMETGALSLEQSLGAYERGIALYRECHQALEQAQLRVRILSDPMRPDDGEPFDPSIVSTSQ.

The segment at 69–88 (DPMRPDDGEPFDPSIVSTSQ) is disordered.

Belongs to the XseB family. As to quaternary structure, heterooligomer composed of large and small subunits.

It is found in the cytoplasm. The enzyme catalyses Exonucleolytic cleavage in either 5'- to 3'- or 3'- to 5'-direction to yield nucleoside 5'-phosphates.. Functionally, bidirectionally degrades single-stranded DNA into large acid-insoluble oligonucleotides, which are then degraded further into small acid-soluble oligonucleotides. The polypeptide is Exodeoxyribonuclease 7 small subunit (Xylella fastidiosa (strain M12)).